The following is a 201-amino-acid chain: MIEYIKGEIAELSPATAVIDCNGLGYAVNISLNTYSAIQGKSSCKLYIYEAIREDAYVLYGFADKQERELFLLLISVSGIGGNTARMILSALSPAELVNVISTENANMLKTVKGIGLKTAQRVIVDLKDKIKTGAMAATAVGGAAGALLPAMNAEVQEEAIAALTMLGFAAAPSQKAVLAILKEEPDAPVEKVIKLALKRL.

The domain I stretch occupies residues 1–63; sequence MIEYIKGEIA…EDAYVLYGFA (63 aa). The tract at residues 64–142 is domain II; that stretch reads DKQERELFLL…TGAMAATAVG (79 aa). A flexible linker region spans residues 143-153; the sequence is GAAGALLPAMN. The tract at residues 153–201 is domain III; it reads NAEVQEEAIAALTMLGFAAAPSQKAVLAILKEEPDAPVEKVIKLALKRL.

It belongs to the RuvA family. Homotetramer. Forms an RuvA(8)-RuvB(12)-Holliday junction (HJ) complex. HJ DNA is sandwiched between 2 RuvA tetramers; dsDNA enters through RuvA and exits via RuvB. An RuvB hexamer assembles on each DNA strand where it exits the tetramer. Each RuvB hexamer is contacted by two RuvA subunits (via domain III) on 2 adjacent RuvB subunits; this complex drives branch migration. In the full resolvosome a probable DNA-RuvA(4)-RuvB(12)-RuvC(2) complex forms which resolves the HJ.

The protein resides in the cytoplasm. The RuvA-RuvB-RuvC complex processes Holliday junction (HJ) DNA during genetic recombination and DNA repair, while the RuvA-RuvB complex plays an important role in the rescue of blocked DNA replication forks via replication fork reversal (RFR). RuvA specifically binds to HJ cruciform DNA, conferring on it an open structure. The RuvB hexamer acts as an ATP-dependent pump, pulling dsDNA into and through the RuvAB complex. HJ branch migration allows RuvC to scan DNA until it finds its consensus sequence, where it cleaves and resolves the cruciform DNA. The polypeptide is Holliday junction branch migration complex subunit RuvA (Bacteroides fragilis (strain ATCC 25285 / DSM 2151 / CCUG 4856 / JCM 11019 / LMG 10263 / NCTC 9343 / Onslow / VPI 2553 / EN-2)).